A 276-amino-acid chain; its full sequence is Large ribosomal subunit protein uL2 (276 aa).

Disordered regions lie at residues 1-20 (MGIKKYNPTTNGRRNMTTND) and 219-276 (TVRG…RRKK). Over residues 7-20 (NPTTNGRRNMTTND) the composition is skewed to polar residues.

The protein belongs to the universal ribosomal protein uL2 family. Part of the 50S ribosomal subunit. Forms a bridge to the 30S subunit in the 70S ribosome.

Its function is as follows. One of the primary rRNA binding proteins. Required for association of the 30S and 50S subunits to form the 70S ribosome, for tRNA binding and peptide bond formation. It has been suggested to have peptidyltransferase activity; this is somewhat controversial. Makes several contacts with the 16S rRNA in the 70S ribosome. The sequence is that of Large ribosomal subunit protein uL2 from Bacillus cereus (strain Q1).